A 111-amino-acid chain; its full sequence is MEFSVESLETPALTKAHLAELLFEQIGLNKRESKDMIDAFFDLISDSLVDGNDVKISGFGNFQIRTKAPRPGRNPRTGEAIPIQARRVVTFHASHKLKDQIQGDSAADIAE.

This sequence belongs to the bacterial histone-like protein family. Heterodimer of an alpha and a beta chain.

This protein is one of the two subunits of integration host factor, a specific DNA-binding protein that functions in genetic recombination as well as in transcriptional and translational control. The chain is Integration host factor subunit alpha from Polaromonas sp. (strain JS666 / ATCC BAA-500).